Reading from the N-terminus, the 240-residue chain is Nicotinamide riboside kinase (240 aa).

13–21 (GCSSSGKTT) serves as a coordination point for ATP. Mg(2+)-binding residues include threonine 20 and aspartate 39. Aspartate 39 acts as the Proton acceptor in catalysis. Substrate is bound by residues 39-42 (DDFY) and 59-60 (WD). An ATP-binding site is contributed by arginine 158. Substrate-binding positions include arginine 159 and 164 to 165 (GY). Residues 162-164 (RKG) and 208-210 (KSK) contribute to the ATP site.

Belongs to the uridine kinase family. NRK subfamily.

It catalyses the reaction beta-nicotinamide D-riboside + ATP = beta-nicotinamide D-ribonucleotide + ADP + H(+). The catalysed reaction is beta-D-ribosylnicotinate + ATP = nicotinate beta-D-ribonucleotide + ADP + H(+). It participates in cofactor biosynthesis; NAD(+) biosynthesis. Catalyzes the phosphorylation of nicotinamide riboside (NR) and nicotinic acid riboside (NaR) to form nicotinamide mononucleotide (NMN) and nicotinic acid mononucleotide (NaMN). The chain is Nicotinamide riboside kinase (NRK1) from Saccharomyces cerevisiae (strain ATCC 204508 / S288c) (Baker's yeast).